A 237-amino-acid chain; its full sequence is Ribonuclease PH (237 aa).

Phosphate contacts are provided by residues Arg-86 and 124–126 (GTR).

This sequence belongs to the RNase PH family. Homohexameric ring arranged as a trimer of dimers.

It carries out the reaction tRNA(n+1) + phosphate = tRNA(n) + a ribonucleoside 5'-diphosphate. Functionally, phosphorolytic 3'-5' exoribonuclease that plays an important role in tRNA 3'-end maturation. Removes nucleotide residues following the 3'-CCA terminus of tRNAs; can also add nucleotides to the ends of RNA molecules by using nucleoside diphosphates as substrates, but this may not be physiologically important. Probably plays a role in initiation of 16S rRNA degradation (leading to ribosome degradation) during starvation. In Beijerinckia indica subsp. indica (strain ATCC 9039 / DSM 1715 / NCIMB 8712), this protein is Ribonuclease PH.